A 322-amino-acid polypeptide reads, in one-letter code: Protein-L-isoaspartate O-methyltransferase (322 aa).

Positions 1-101 are disordered; that stretch reads MSGERAKRFP…AKQGDRSAAP (101 aa). The span at 14 to 29 shows a compositional bias: basic and acidic residues; sequence EDLKREPRKPEGRVAE. Composition is skewed to low complexity over residues 33 to 51 and 76 to 91; these read AGDA…PAAA and HAPA…PQGG. The active site involves serine 170.

This sequence belongs to the methyltransferase superfamily. L-isoaspartyl/D-aspartyl protein methyltransferase family.

It is found in the cytoplasm. It carries out the reaction [protein]-L-isoaspartate + S-adenosyl-L-methionine = [protein]-L-isoaspartate alpha-methyl ester + S-adenosyl-L-homocysteine. Its function is as follows. Catalyzes the methyl esterification of L-isoaspartyl residues in peptides and proteins that result from spontaneous decomposition of normal L-aspartyl and L-asparaginyl residues. It plays a role in the repair and/or degradation of damaged proteins. The protein is Protein-L-isoaspartate O-methyltransferase of Burkholderia pseudomallei (strain 1710b).